Consider the following 67-residue polypeptide: Penaeidin-4a (67 aa).

A signal peptide spans 1–19; it reads MRLVVCLVFLASFALVCQG. Disulfide bonds link Cys42–Cys56, Cys45–Cys63, and Cys57–Cys64. Arg66 carries the arginine amide modification.

Belongs to the penaeidin family.

It localises to the cytoplasmic granule. Functionally, antibacterial and antifungal activity. Presents chitin-binding activity. The protein is Penaeidin-4a of Penaeus vannamei (Whiteleg shrimp).